The following is a 254-amino-acid chain: DNA repair protein RecO (254 aa).

The protein belongs to the RecO family.

Functionally, involved in DNA repair and RecF pathway recombination. The sequence is that of DNA repair protein RecO from Agrobacterium fabrum (strain C58 / ATCC 33970) (Agrobacterium tumefaciens (strain C58)).